We begin with the raw amino-acid sequence, 467 residues long: MTEVFTIKQCLDGEISIDETVTVRGWVKTRRDSKAGLSFISLHDGSCFSPIQIVATDQLSNYQKEVTKLTAGCSMIATGKLVASQGKGQFFEIQAESIEVVGWVENPDTYPIQAKRHTLEFLREVAHLRPRTNTISAVTRVRHSLAQAIHRFYHEQGFFWVHTPIITASDCEGAGEMFRVSTLDLLNIPKNDKGQIDFSKDFFGRETFLTVSGQLNVEAYCMAMSKVYTFGPTFRAENSNTSRHLAEFWMIEPEIAFANLEDICKLSQNMLRYLCKTVLEERSDDMDFFNQFVAPGCIERMEHIADSEFEIMTYTDAIKALEASEQKFEFPVSWGLDLQSEHERYLAEVLCKKPVIVTNYPQEIKGFYMRLNDDGKTVAAMDVLAPGIGEIIGGSQREERLEILDRRMDECNLNKEHYQWYRDLRRYGTVPHAGFGLGFERLISYVTGVSNVRDVIPFPRTPGHADY.

It belongs to the class-II aminoacyl-tRNA synthetase family. Homodimer.

The protein localises to the cytoplasm. The enzyme catalyses tRNA(Asn) + L-asparagine + ATP = L-asparaginyl-tRNA(Asn) + AMP + diphosphate + H(+). The polypeptide is Asparagine--tRNA ligase (Legionella pneumophila (strain Lens)).